The chain runs to 257 residues: GTP cyclohydrolase 1 type 2 homolog (257 aa).

Residues H65, D103, H221, and E224 each contribute to the a divalent metal cation site.

The protein belongs to the GTP cyclohydrolase I type 2/NIF3 family. Homohexamer.

This is GTP cyclohydrolase 1 type 2 homolog (ykiD) from Lactococcus lactis subsp. lactis (strain IL1403) (Streptococcus lactis).